An 89-amino-acid chain; its full sequence is Putative regulatory protein Nther_1328 (89 aa).

It belongs to the RemA family.

The polypeptide is Putative regulatory protein Nther_1328 (Natranaerobius thermophilus (strain ATCC BAA-1301 / DSM 18059 / JW/NM-WN-LF)).